The sequence spans 1494 residues: ABC multidrug transporter atrG (1494 aa).

Positions 1–11 are enriched in polar residues; it reads MSLLGTINPNL. Disordered stretches follow at residues 1–48 and 84–105; these read MSLL…RTSD and FSVS…TLNP. N41 carries N-linked (GlcNAc...) asparagine glycosylation. N-linked (GlcNAc...) asparagine glycosylation is found at N141 and N340. Positions 162-416 constitute an ABC transporter 1 domain; the sequence is LQVGALFRAV…FTTMGFECPE (255 aa). The next 2 membrane-spanning stretches (helical) occupy residues 527–547 and 561–581; these read LTMS…SVFY and ALLF…ILTL. A glycan (N-linked (GlcNAc...) asparagine) is linked at N622. 3 consecutive transmembrane segments (helical) span residues 636-656, 669-689, and 778-798; these read GPFF…SMLF, ALVP…FTIP, and GIMF…TEYI. N-linked (GlcNAc...) asparagine glycosylation occurs at N835. The 244-residue stretch at 852-1095 folds into the ABC transporter 2 domain; sequence FHWQDVCYDI…LASYFERNGA (244 aa). 888–895 serves as a coordination point for ATP; that stretch reads GVSGAGKT. 5 helical membrane passes run 1191 to 1211, 1227 to 1247, 1276 to 1296, 1312 to 1332, and 1351 to 1371; these read YIYS…FSFF, IFML…NFVT, LPWN…PIGL, LMWL…HMMI, and LCLI…FWIF. N1410 and N1432 each carry an N-linked (GlcNAc...) asparagine glycan. The chain crosses the membrane as a helical span at residues 1463–1483; it reads FGIMWAFIVFNIAAAVFIYWL.

The protein belongs to the ABC transporter superfamily. ABCG family. PDR (TC 3.A.1.205) subfamily.

It is found in the cell membrane. The catalysed reaction is (R)-miconazole(in) + ATP + H2O = (R)-miconazole(out) + ADP + phosphate + H(+). Functionally, pleiotropic ABC efflux transporter involved in the basal level of azole susceptibility. Confers resistance to miconazole and clotrimazole. This is ABC multidrug transporter atrG from Aspergillus oryzae (strain ATCC 42149 / RIB 40) (Yellow koji mold).